The sequence spans 356 residues: Phosphate acyltransferase (356 aa).

The protein belongs to the PlsX family. Homodimer. Probably interacts with PlsY.

It is found in the cytoplasm. It catalyses the reaction a fatty acyl-[ACP] + phosphate = an acyl phosphate + holo-[ACP]. It functions in the pathway lipid metabolism; phospholipid metabolism. Catalyzes the reversible formation of acyl-phosphate (acyl-PO(4)) from acyl-[acyl-carrier-protein] (acyl-ACP). This enzyme utilizes acyl-ACP as fatty acyl donor, but not acyl-CoA. This Mesorhizobium japonicum (strain LMG 29417 / CECT 9101 / MAFF 303099) (Mesorhizobium loti (strain MAFF 303099)) protein is Phosphate acyltransferase.